The primary structure comprises 301 residues: Cell division control protein 2 homolog 1 (301 aa).

In terms of domain architecture, Protein kinase spans 5-297; that stretch reads YERLQKIGEG…AAQALEHPYF (293 aa). Residues 11–19 and Lys-34 contribute to the ATP site; that span reads IGEGSYGVV. Ser-15 carries the phosphoserine modification. Tyr-16 carries the post-translational modification Phosphotyrosine. The active-site Proton acceptor is Asp-127. Phosphothreonine; by CAK is present on Thr-160.

It belongs to the protein kinase superfamily. CMGC Ser/Thr protein kinase family. CDC2/CDKX subfamily. As to quaternary structure, forms a stable but non-covalent complex with a regulatory subunit and with a cyclin.

It carries out the reaction L-seryl-[protein] + ATP = O-phospho-L-seryl-[protein] + ADP + H(+). The catalysed reaction is L-threonyl-[protein] + ATP = O-phospho-L-threonyl-[protein] + ADP + H(+). Its activity is regulated as follows. Phosphorylation at Ser-15 or Tyr-16 inactivates the enzyme, while phosphorylation at Thr-160 activates it. Functionally, probably involved in the control of the cell cycle. The protein is Cell division control protein 2 homolog 1 (CRK1) of Trypanosoma brucei brucei.